An 875-amino-acid polypeptide reads, in one-letter code: Ubiquitin-protein ligase E3A (875 aa).

The segment at 44–83 (CGNEACTNEFCASCPTFLRMDNNAAAIKALELYKINAKLC) adopts a C4-type; atypical zinc-finger fold. Residues 175-186 (KEELKSLQAKDE) are compositionally biased toward basic and acidic residues. Residues 175–226 (KEELKSLQAKDEDKDEDEKEKAACSAAAMEEDSEASSSRIGDSSQGDNNLQK) form a disordered region. A compositionally biased stretch (polar residues) spans 213-225 (RIGDSSQGDNNLQ). Position 218 is a phosphoserine (S218). The tract at residues 401–418 (IPESSELTLQELLGEERR) is E6-binding. Residues 418 to 517 (RNKKGPRVDP…TVLYSLVQGQ (100 aa)) are interaction with HCV core protein. Phosphotyrosine; by ABL1 is present on Y659. The HECT domain maps to 776-875 (YDGGYTRDSV…ITYAKGFGML (100 aa)). The active-site Glycyl thioester intermediate is the C843.

As to quaternary structure, the active form is probably a homotrimer. Binds UBQLN1 and UBQLN2. Interacts with the 26S proteasome. Interacts with BPY2. Interacts with HIF1AN, MAPK6 and NEURL4; interaction with MAPK6 may be mediated by NEURL4. Interacts with the proteasomal subunit PSMD4. Interacts with ESR1 and WBP2. Interacts with BMAL1. Interacts with ARC. (Microbial infection) Interacts with HCV core protein and targets it to degradation. In terms of assembly, (Microbial infection) Interacts with the E6 protein of the cancer-associated human papillomavirus types 16 and 18. The E6/E6-AP complex binds to and targets the p53/TP53 tumor-suppressor protein for ubiquitin-mediated proteolysis. In terms of processing, phosphorylation at Tyr-659 by ABL1 impairs E3 ligase activity and protects p53/TP53 from degradation in (HPV)-infected cells.

It localises to the cytoplasm. It is found in the nucleus. It carries out the reaction S-ubiquitinyl-[E2 ubiquitin-conjugating enzyme]-L-cysteine + [acceptor protein]-L-lysine = [E2 ubiquitin-conjugating enzyme]-L-cysteine + N(6)-ubiquitinyl-[acceptor protein]-L-lysine.. Its pathway is protein modification; protein ubiquitination. Its function is as follows. E3 ubiquitin-protein ligase which accepts ubiquitin from an E2 ubiquitin-conjugating enzyme in the form of a thioester and transfers it to its substrates. Several substrates have been identified including the BMAL1, ARC, LAMTOR1, RAD23A and RAD23B, MCM7 (which is involved in DNA replication), annexin A1, the PML tumor suppressor, and the cell cycle regulator CDKN1B. Additionally, may function as a cellular quality control ubiquitin ligase by helping the degradation of the cytoplasmic misfolded proteins. Finally, UBE3A also promotes its own degradation in vivo. Plays an important role in the regulation of the circadian clock: involved in the ubiquitination of the core clock component BMAL1, leading to its proteasomal degradation. Acts as transcriptional coactivator of progesterone receptor PGR upon progesterone hormone activation. Acts as a regulator of synaptic development by mediating ubiquitination and degradation of ARC. Required for synaptic remodeling in neurons by mediating ubiquitination and degradation of LAMTOR1, thereby limiting mTORC1 signaling and activity-dependent synaptic remodeling. Synergizes with WBP2 in enhancing PGR activity. Functionally, (Microbial infection) Catalyzes the high-risk human papilloma virus E6-mediated ubiquitination of p53/TP53, contributing to the neoplastic progression of cells infected by these viruses. The protein is Ubiquitin-protein ligase E3A of Homo sapiens (Human).